Here is a 304-residue protein sequence, read N- to C-terminus: Mas-related G-protein coupled receptor member A1 (304 aa).

The Extracellular segment spans residues 1–17 (MDNTIPGGINITILIPN). N10 carries an N-linked (GlcNAc...) asparagine glycan. A helical transmembrane segment spans residues 18-38 (LMIIIFGLVGLTGNGIVFWLL). Residues 39 to 53 (GFCLHRNAFSVYILN) lie on the Cytoplasmic side of the membrane. A helical transmembrane segment spans residues 54–74 (LALADFFFLLGHIIDSILLLL). Position 75 (N75) is a topological domain, extracellular. Residues 76 to 96 (VFYPITFLLCFYTIMMVLYIA) form a helical membrane-spanning segment. The Cytoplasmic portion of the chain corresponds to 97-131 (GLSMLSAISTERCLSVLCPIWYHCHRPEHTSTVMC). The chain crosses the membrane as a helical span at residues 132 to 152 (AVIWVLSLLICILNSYFCGFL). Topologically, residues 153–166 (NTQYKNENGCLALN) are extracellular. The helical transmembrane segment at 167-187 (FFTAAYLMFLFVVLCLSSLAL) threads the bilayer. Residues 188-206 (VARLFCGTGQIKLTRLYVT) are Cytoplasmic-facing. A helical transmembrane segment spans residues 207 to 227 (IILSILVFLLCGLPFGIHWFL). Residues 228 to 243 (LFKIKDDFHVFDLGFY) are Extracellular-facing. The chain crosses the membrane as a helical span at residues 244 to 264 (LASVVLTAINSCANPIIYFFV). Residues 265-304 (GSFRHRLKHQTLKMVLQNALQDTPETAKIMVEMSRSKSEP) lie on the Cytoplasmic side of the membrane.

It belongs to the G-protein coupled receptor 1 family. Mas subfamily. Expressed in a subset of sensory neurons that includes nociceptors. Expressed in the subclass of non-peptidergic sensory neurons that are IB4(+) and VR1(-).

It is found in the cell membrane. Functionally, orphan receptor activated by a subset of RFamide-family neuropeptides such as FLRF-amide and FMRF-amide. Mediates its action by association with G proteins that activate a phosphatidylinositol-calcium second messenger system. Its effect is mediated by G(q) and G(11) proteins. May regulate the function of nociceptive neurons by modulation of pain perception. The protein is Mas-related G-protein coupled receptor member A1 (Mrgpra1) of Mus musculus (Mouse).